The following is a 486-amino-acid chain: Na(+)/H(+) antiporter NhaA 2 (486 aa).

The next 11 membrane-spanning stretches (helical) occupy residues 58 to 78, 102 to 122, 138 to 158, 168 to 188, 198 to 218, 220 to 240, 260 to 280, 300 to 320, 338 to 358, 374 to 394, and 404 to 424; these read GGLL…TAPG, LTDW…GLEL, ALPV…CLAL, AWAI…SLAG, VLLG…ALGL, HGIN…TALA, ISLH…GLLV, LGPI…TGVS, VAVG…WLAV, LVPL…ITRL, and GAST…LTAL. The segment at 432 to 486 is disordered; the sequence is GAPATRGSSRPATQVGGVAGPIPQTRRESDGGPTGGQEPPPARVRRAPPASPHPR.

The protein belongs to the NhaA Na(+)/H(+) (TC 2.A.33) antiporter family.

It localises to the cell membrane. It catalyses the reaction Na(+)(in) + 2 H(+)(out) = Na(+)(out) + 2 H(+)(in). Functionally, na(+)/H(+) antiporter that extrudes sodium in exchange for external protons. This is Na(+)/H(+) antiporter NhaA 2 from Frankia alni (strain DSM 45986 / CECT 9034 / ACN14a).